The following is a 706-amino-acid chain: Elongation factor G (706 aa).

Residues 8 to 297 (SYVRNIGIGA…AVVDYLPSPN (290 aa)) enclose the tr-type G domain. GTP-binding positions include 17 to 24 (AHIDAGKT), 95 to 99 (DTPGH), and 149 to 152 (NKMD).

Belongs to the TRAFAC class translation factor GTPase superfamily. Classic translation factor GTPase family. EF-G/EF-2 subfamily.

It is found in the cytoplasm. In terms of biological role, catalyzes the GTP-dependent ribosomal translocation step during translation elongation. During this step, the ribosome changes from the pre-translocational (PRE) to the post-translocational (POST) state as the newly formed A-site-bound peptidyl-tRNA and P-site-bound deacylated tRNA move to the P and E sites, respectively. Catalyzes the coordinated movement of the two tRNA molecules, the mRNA and conformational changes in the ribosome. In Orientia tsutsugamushi (strain Boryong) (Rickettsia tsutsugamushi), this protein is Elongation factor G.